The sequence spans 171 residues: Cation channel sperm-associated auxiliary subunit TMEM249 (171 aa).

Topologically, residues Met1–Leu2 are cytoplasmic. A helical membrane pass occupies residues Phe3–Glu17. The Extracellular segment spans residues Val18–Ala28. Residues Tyr29–Ser40 form a helical membrane-spanning segment. Residues Ser41–Val171 are Cytoplasmic-facing.

Component of the CatSper complex or CatSpermasome composed of the core pore-forming members CATSPER1, CATSPER2, CATSPER3 and CATSPER4 as well as auxiliary members CATSPERB, CATSPERG2, CATSPERD, CATSPERE, CATSPERZ, C2CD6/CATSPERT, SLCO6C1, TMEM249, TMEM262 and EFCAB9. HSPA1 may be an additional auxiliary complex member. The core complex members CATSPER1, CATSPER2, CATSPER3 and CATSPER4 form a heterotetrameric channel. The auxiliary CATSPERB, CATSPERG2, CATSPERD and CATSPERE subunits form a pavilion-like structure over the pore which stabilizes the complex through interactions with CATSPER4, CATSPER3, CATSPER1 and CATSPER2 respectively. SLCO6C1 interacts with CATSPERE and TMEM262/CATSPERH interacts with CATSPERB, further stabilizing the complex. C2CD6/CATSPERT interacts at least with CATSPERD and is required for targeting the CatSper complex in the flagellar membrane.

The protein resides in the cell projection. It is found in the cilium. Its subcellular location is the flagellum membrane. Its function is as follows. Auxiliary component of the CatSper complex, a complex involved in sperm cell hyperactivation. This is Cation channel sperm-associated auxiliary subunit TMEM249 from Mus musculus (Mouse).